Consider the following 304-residue polypeptide: Protease HtpX homolog (304 aa).

2 consecutive transmembrane segments (helical) span residues 14–34 (IFII…IGII) and 39–59 (YLNG…IMVM). H144 provides a ligand contact to Zn(2+). The active site involves E145. H148 is a binding site for Zn(2+). The next 2 membrane-spanning stretches (helical) occupy residues 159-179 (IAIA…RMIF) and 202-222 (AIIY…ATAI). A Zn(2+)-binding site is contributed by E231.

It belongs to the peptidase M48B family. It depends on Zn(2+) as a cofactor.

The protein localises to the cell membrane. This chain is Protease HtpX homolog, found in Listeria monocytogenes serovar 1/2a (strain ATCC BAA-679 / EGD-e).